The primary structure comprises 141 residues: ATP synthase epsilon chain (141 aa).

The protein belongs to the ATPase epsilon chain family. In terms of assembly, F-type ATPases have 2 components, CF(1) - the catalytic core - and CF(0) - the membrane proton channel. CF(1) has five subunits: alpha(3), beta(3), gamma(1), delta(1), epsilon(1). CF(0) has three main subunits: a, b and c.

The protein localises to the cell inner membrane. In terms of biological role, produces ATP from ADP in the presence of a proton gradient across the membrane. This chain is ATP synthase epsilon chain, found in Aromatoleum aromaticum (strain DSM 19018 / LMG 30748 / EbN1) (Azoarcus sp. (strain EbN1)).